Here is a 121-residue protein sequence, read N- to C-terminus: Large ribosomal subunit protein uL14c (121 aa).

It belongs to the universal ribosomal protein uL14 family. In terms of assembly, part of the 50S ribosomal subunit.

The protein localises to the plastid. Its subcellular location is the apicoplast. Its function is as follows. Binds to 23S rRNA. This chain is Large ribosomal subunit protein uL14c (rpl14), found in Eimeria tenella (Coccidian parasite).